Consider the following 887-residue polypeptide: Amyloid-beta-like protein (887 aa).

Residues 1 to 27 (MCAALRRNLLLRSLWVVLAIGTAQVQA) form the signal peptide. Over 28–813 (ASPRWEPQIA…HAAKEGRNVY (786 aa)) the chain is Extracellular. A GFLD subdomain region spans residues 30 to 133 (PRWEPQIAVL…KPFRCLGPFQ (104 aa)). In terms of domain architecture, E1 spans 30-199 (PRWEPQIAVL…SGVEFVCCPK (170 aa)). Intrachain disulfides connect Cys40–Cys70, Cys81–Cys128, Cys106–Cys116, Cys143–Cys197, Cys154–Cys184, and Cys168–Cys196. The cuBD subdomain stretch occupies residues 141 to 199 (EGCLFDHIHNASRCWPFVRWNQTGAAACQERGMQMRSFAMLLPCGISVFSGVEFVCCPK). N-linked (GlcNAc...) asparagine glycosylation is found at Asn150 and Asn161. 2 disordered regions span residues 225–365 (NDEL…STPQ) and 377–396 (NSGN…QPTS). 2 N-linked (GlcNAc...) asparagine glycosylation sites follow: Asn237 and Asn240. Residues 246–267 (NEDDLDDEDDLMGDDEEDDMVA) are compositionally biased toward acidic residues. Low complexity predominate over residues 268-292 (DEAATAGGSPNTGSSGDSNSGSLDD). Acidic residues predominate over residues 293 to 321 (INAEYDSGEEGDNYEEDGAGSESEAEVEA). The span at 329-352 (AKVVSLKSDSSSPSSAPVAPAPEK) shows a compositional bias: low complexity. The E2 domain occupies 395–597 (TSDPYFTHFD…AKIAQLMNDY (203 aa)). Asn574 carries N-linked (GlcNAc...) asparagine glycosylation. Positions 675 to 743 (KSQVAEQQSQ…TEYGEATVSS (69 aa)) are disordered. Positions 681–699 (QQSQPTQSSTQSQAQQQQQ) are enriched in low complexity. A helical transmembrane segment spans residues 814–834 (FTLSFAGIALMAAVFVGVAVA). Residues 835–887 (KWRTSRSPHAQGFIEVDQNVTTHHPIVREEKIVPNMQINGYENPTYKYFEVKE) lie on the Cytoplasmic side of the membrane. The YENPXY motif signature appears at 875-880 (YENPTY).

The protein belongs to the APP family. In terms of assembly, interacts (via the intracellular domain, ICD) with APP-BP1. In terms of tissue distribution, expressed in postmitotic neurons in the central and peripheral nervous systems. Within the nervous system, transcripts are not observed in neuroblasts, newly generated neurons and at least one class of presumed glial cells.

The protein resides in the membrane. In terms of biological role, during development, plays a role in the regulation of the neddylation pathway. Appl and APP-BP1 interact antagonistically during development. This Drosophila melanogaster (Fruit fly) protein is Amyloid-beta-like protein (Appl).